A 37-amino-acid polypeptide reads, in one-letter code: Large ribosomal subunit protein bL36 (37 aa).

The protein belongs to the bacterial ribosomal protein bL36 family.

The chain is Large ribosomal subunit protein bL36 from Symbiobacterium thermophilum (strain DSM 24528 / JCM 14929 / IAM 14863 / T).